The sequence spans 279 residues: Elongation factor Ts (279 aa).

The involved in Mg(2+) ion dislocation from EF-Tu stretch occupies residues 80 to 83 (TDFV).

Belongs to the EF-Ts family.

The protein resides in the cytoplasm. Functionally, associates with the EF-Tu.GDP complex and induces the exchange of GDP to GTP. It remains bound to the aminoacyl-tRNA.EF-Tu.GTP complex up to the GTP hydrolysis stage on the ribosome. This chain is Elongation factor Ts, found in Borrelia garinii subsp. bavariensis (strain ATCC BAA-2496 / DSM 23469 / PBi) (Borreliella bavariensis).